We begin with the raw amino-acid sequence, 93 residues long: Large ribosomal subunit protein eL43 (93 aa).

The C4-type zinc finger occupies Cys-39 to Cys-60.

It belongs to the eukaryotic ribosomal protein eL43 family.

This is Large ribosomal subunit protein eL43 (RPL37A) from Brassica rapa subsp. rapa (Turnip).